A 1277-amino-acid polypeptide reads, in one-letter code: Membrane-associated guanylate kinase, WW and PDZ domain-containing protein 2 (1277 aa).

A PDZ domain is found at 17-101 (ESVIGRNPEG…PLRLKCVKQG (85 aa)). In terms of domain architecture, Guanylate kinase-like spans 109 to 283 (RHYLNLRFQK…APVYSQPEEL (175 aa)). The disordered stretch occupies residues 205-308 (PGATPSAEGK…EDSDPLPDNW (104 aa)). The segment covering 281-296 (EELKDQMDDTKSTKPE) has biased composition (basic and acidic residues). WW domains are found at residues 302–335 (DPLPDNWEMAYTEKGEVYFIDHNTKTTSWLDPRL) and 348–381 (NELPYGWEKIDDPIYGTYYVDHINRRTQFENPVL). The tract at residues 302–381 (DPLPDNWEMA…RRTQFENPVL (80 aa)) is interaction with DDN. At Y362 the chain carries Phosphotyrosine. Residues 426-510 (STTLKKSNMG…SVNLVLCRGY (85 aa)) enclose the PDZ 1 domain. Residues 556-575 (QSVPDITDRPPHSLHSMPAD) form a disordered region. Residues 605–683 (TLTIVKGAKG…ETSLIIHRGG (79 aa)) enclose the PDZ 2 domain. At S686 the chain carries Phosphoserine. A PDZ 3 domain is found at 778 to 860 (DVHLRRMESG…NGQVNLTVRR (83 aa)). Residue Y827 is modified to Phosphotyrosine. A disordered region spans residues 869–913 (CPENGRSPGSVSTHHSSPRSDYATYANSNHAAPSNNASPPEGFAS). A phosphoserine mark is found at S884 and S885. Over residues 894-908 (ANSNHAAPSNNASPP) the composition is skewed to low complexity. One can recognise a PDZ 4 domain in the interval 920–1010 (DVIIHRKENE…SVTLRIIPQE (91 aa)). Polar residues predominate over residues 1011–1042 (ELNNPTSAPSSEKQSPMAQQHSPLAQQHSPLA). A disordered region spans residues 1011-1130 (ELNNPTSAPS…PDTRQYPLSD (120 aa)). A compositionally biased stretch (basic and acidic residues) spans 1069–1085 (NSYRSEVKARQDVKPDI). Residues 1141–1223 (TVDMEKGAKG…RVRLLLKRGT (83 aa)) enclose the PDZ 5 domain.

The protein belongs to the MAGUK family. As to quaternary structure, interacts (via its WW domains) with DRPLA. Interacts with CTNNB1, ACVR2A, SMAD2 and SMAD3. Part of a complex consisting of MAGI2/ARIP1, ACVR2A, ACVR1B and SMAD3. May interact with HTR2A and IGSF9. Interacts with HTR4. Interacts (via guanylate kinase domain) with DLGAP1. Interacts (via PDZ domains) with GRIN2A, GRID2 and NLGN1. Interacts with CTNND2. Interacts with MAGUIN-1. Interacts (via its second PDZ domain) with PTEN (via unphosphorylated C-terminus); this interaction diminishes the degradation rate of PTEN. Found in a complex, at least composed of KIDINS220, MAGI2, NTRK1 and RAPGEF2; the complex is mainly formed at late endosomes in a NGF-dependent manner. Interacts with RAPGEF2; the interaction occurs before or after nerve growth factor (NGF) stimulation. Isoform 1 interacts (via PDZ domain) with KIDINS220 isoform 2 (via C-terminal domain). Interacts with DDN. Identified in a complex with ACTN4, CASK, IQGAP1, NPHS1, SPTAN1 and SPTBN1. Interacts with DLL1. Found in a complex with IGSF9B and NLGN2; the interaction with IGSF9B is mediated via the PDZ 5 and PDZ 6 domains, while the interaction with NLGN2 is mediated via the WW1, WW2 and PDZ2 domains. Interacts (via PDZ 6 domain) with USH1G (via SAM domain); the interaction is triggered by phosphorylation of USH1G by CK2 and negatively regulates MAGI2-mediated endocytosis. Expressed in the foot process layer of podocytes of the kidney glomeruli but not in tubules (at protein level). Expressed in the brain.

Its subcellular location is the cytoplasm. It is found in the late endosome. It localises to the synapse. The protein localises to the synaptosome. The protein resides in the cell membrane. Its subcellular location is the cytoskeleton. It is found in the microtubule organizing center. It localises to the centrosome. The protein localises to the cell projection. The protein resides in the cilium. Its subcellular location is the centriole. It is found in the photoreceptor inner segment. It localises to the photoreceptor outer segment. In terms of biological role, seems to act as scaffold molecule at synaptic junctions by assembling neurotransmitter receptors and cell adhesion proteins. Plays a role in nerve growth factor (NGF)-induced recruitment of RAPGEF2 to late endosomes and neurite outgrowth. May play a role in regulating activin-mediated signaling in neuronal cells. Enhances the ability of PTEN to suppress AKT1 activation. Plays a role in receptor-mediated clathrin-dependent endocytosis which is required for ciliogenesis. This is Membrane-associated guanylate kinase, WW and PDZ domain-containing protein 2 (Magi2) from Rattus norvegicus (Rat).